We begin with the raw amino-acid sequence, 375 residues long: Acetylornithine aminotransferase (375 aa).

Pyridoxal 5'-phosphate contacts are provided by residues 102–103 (GA) and Phe-129. Position 132 (Arg-132) interacts with N(2)-acetyl-L-ornithine. 214–217 (DEVQ) is a binding site for pyridoxal 5'-phosphate. Lys-243 carries the N6-(pyridoxal phosphate)lysine modification. Residue Ser-271 coordinates N(2)-acetyl-L-ornithine. Thr-272 serves as a coordination point for pyridoxal 5'-phosphate.

It belongs to the class-III pyridoxal-phosphate-dependent aminotransferase family. ArgD subfamily. As to quaternary structure, homodimer. The cofactor is pyridoxal 5'-phosphate.

It is found in the cytoplasm. The catalysed reaction is N(2)-acetyl-L-ornithine + 2-oxoglutarate = N-acetyl-L-glutamate 5-semialdehyde + L-glutamate. It participates in amino-acid biosynthesis; L-arginine biosynthesis; N(2)-acetyl-L-ornithine from L-glutamate: step 4/4. This chain is Acetylornithine aminotransferase, found in Archaeoglobus fulgidus (strain ATCC 49558 / DSM 4304 / JCM 9628 / NBRC 100126 / VC-16).